The sequence spans 220 residues: Protein DGCR6 (220 aa).

Positions 76–142 form a coiled coil; it reads KSLYNQRLRL…EQRAMDQKIV (67 aa).

Belongs to the gonadal family. As to expression, found in all tissues examined with highest expression in liver, heart and skeletal muscle. Lower levels in pancreas and placenta. Weak expression in brain.

It is found in the nucleus. In terms of biological role, may play a role in neural crest cell migration into the third and fourth pharyngeal pouches. The polypeptide is Protein DGCR6 (DGCR6) (Homo sapiens (Human)).